Reading from the N-terminus, the 449-residue chain is 23S rRNA (uracil(1939)-C(5))-methyltransferase RlmD (449 aa).

In terms of domain architecture, TRAM spans 1–66; the sequence is MGRSRHHNKL…AKFDEAKVVE (66 aa). Residues Cys-79, Cys-85, Cys-88, and Cys-169 each coordinate [4Fe-4S] cluster. 6 residues coordinate S-adenosyl-L-methionine: Gln-280, Phe-309, Asn-314, Glu-330, Asn-357, and Asp-379. The active-site Nucleophile is the Cys-405.

This sequence belongs to the class I-like SAM-binding methyltransferase superfamily. RNA M5U methyltransferase family. RlmD subfamily.

The enzyme catalyses uridine(1939) in 23S rRNA + S-adenosyl-L-methionine = 5-methyluridine(1939) in 23S rRNA + S-adenosyl-L-homocysteine + H(+). Functionally, catalyzes the formation of 5-methyl-uridine at position 1939 (m5U1939) in 23S rRNA. The polypeptide is 23S rRNA (uracil(1939)-C(5))-methyltransferase RlmD (Francisella tularensis subsp. tularensis (strain FSC 198)).